The chain runs to 811 residues: Ribonucleoside-diphosphate reductase large subunit (811 aa).

Substrate contacts are provided by residues Thr231, 246-247 (SC), Gly277, 450-454 (NLCTE), and 636-640 (PTASS). A disulfide bridge connects residues Cys247 and Cys467. The active-site Proton acceptor is the Asn450. Cys452 acts as the Cysteine radical intermediate in catalysis. Glu454 (proton acceptor) is an active-site residue.

Belongs to the ribonucleoside diphosphate reductase large chain family. As to quaternary structure, heterotetramer composed of a homodimer of the large subunit (R1) and a homodimer of the small subunit (R2). Larger multisubunit protein complex are also active, composed of (R1)n(R2)n.

It catalyses the reaction a 2'-deoxyribonucleoside 5'-diphosphate + [thioredoxin]-disulfide + H2O = a ribonucleoside 5'-diphosphate + [thioredoxin]-dithiol. In terms of biological role, ribonucleoside-diphosphate reductase holoenzyme provides the precursors necessary for viral DNA synthesis. Allows virus growth in non-dividing cells, as well as reactivation from latency in infected hosts. Catalyzes the biosynthesis of deoxyribonucleotides from the corresponding ribonucleotides. This is Ribonucleoside-diphosphate reductase large subunit from Amazona oratrix (yellow-headed parrot).